Reading from the N-terminus, the 216-residue chain is Probable RNA 2'-phosphotransferase 1 (216 aa).

Belongs to the KptA/TPT1 family.

Removes the 2'-phosphate from RNA via an intermediate in which the phosphate is ADP-ribosylated by NAD followed by a presumed transesterification to release the RNA and generate ADP-ribose 1''-2''-cyclic phosphate (APPR&gt;P). May function as an ADP-ribosylase. The protein is Probable RNA 2'-phosphotransferase 1 (kptA1) of Archaeoglobus fulgidus (strain ATCC 49558 / DSM 4304 / JCM 9628 / NBRC 100126 / VC-16).